Consider the following 232-residue polypeptide: Venom allergen 5 (232 aa).

The signal sequence occupies residues 1 to 23 (MEQIKYLLIGIIFSSAISSSLQC). Disulfide bonds link cysteine 28/cysteine 43, cysteine 54/cysteine 119, and cysteine 198/cysteine 215. The SCP domain occupies 71–217 (LQLHNELRAK…FYTTMVACNY (147 aa)).

It belongs to the CRISP family. Venom allergen 5-like subfamily. Expressed by the venom gland.

Its subcellular location is the secreted. The polypeptide is Venom allergen 5 (Microctonus hyperodae (Parasitoid wasp)).